The chain runs to 11103 residues: Colossin-A (11103 aa).

Residues 1–35 form the signal peptide; sequence MGTIKTKFKNNYLKNSYLFIIYIILFNLVIGIANS. N-linked (GlcNAc...) asparagine glycosylation is found at N95, N120, N137, and N198. Residues 273 to 324 form a Kelch 1 repeat; that stretch reads NLFAVGNYVFFDVNRDGVHETTELFAPNVKVELYDAISSTRLIASTFTDLNG. One can recognise a CNA-B 1 domain in the interval 298–359; the sequence is APNVKVELYD…SNGPDNVINA (62 aa). N-linked (GlcNAc...) asparagine glycosylation is found at N372, N386, and N422. The CNA-B 2 domain maps to 423 to 469; that stretch reads LSGITVQLTTPSHVVLKTAQTDYAGNYVFDDLSEGVYSVHFILPENY. An N-linked (GlcNAc...) asparagine glycan is attached at N493. 6 CNA-B domains span residues 551–599, 676–745, 803–871, 931–999, 1057–1095, and 1170–1231; these read LPGV…PDGY, VANV…INLT, APFV…FTLN, AEGV…IDLS, LPNI…EGDY, and LSNT…FNSS. An N-linked (GlcNAc...) asparagine glycan is attached at N678. N-linked (GlcNAc...) asparagine glycans are attached at residues N1059, N1229, and N1239. The CNA-B 9 domain maps to 1277–1314; that stretch reads ISNIPLSLISQKTNQIISSVVTDSNGKYQFEDVPPGDY. A glycan (N-linked (GlcNAc...) asparagine) is linked at N1329. CNA-B domains follow at residues 1391-1458, 1494-1530, 1602-1651, 1708-1779, 1824-1891, 1927-1963, 2035-2086, and 2141-2177; these read SDVS…FKLT, LPGV…PGDY, LPGV…YKQV, LSDI…VTVK, LPGV…QVAQ, and VEGI…PGDY. N1613 is a glycosylation site (N-linked (GlcNAc...) asparagine). The segment at 1716–1740 is disordered; it reads TDKDGNEISNTKSGPDGKYQFEDVP. N-linked (GlcNAc...) asparagine glycans are attached at residues N1759 and N1772. N2046 carries N-linked (GlcNAc...) asparagine glycosylation. N-linked (GlcNAc...) asparagine glycosylation is found at N2192 and N2311. CNA-B domains are found at residues 2254-2321, 2357-2402, 2465-2514, 2571-2640, 2687-2754, 2790-2835, 2898-2947, and 3004-3040; these read SDVS…FKLT, LPGV…TPIG, LPGV…YKQV, LSDI…NFVT, and LEGI…PGDY. N2476 carries N-linked (GlcNAc...) asparagine glycosylation. A disordered region spans residues 2580–2603; that stretch reads DKDGNEITNTKSGPDGKYQFEDVP. N-linked (GlcNAc...) asparagine glycosylation is present at N2622. 2 N-linked (GlcNAc...) asparagine glycosylation sites follow: N2801 and N2909. N3048, N3055, and N3118 each carry an N-linked (GlcNAc...) asparagine glycan. 4 consecutive CNA-B domains span residues 3117 to 3184, 3220 to 3256, 3328 to 3364, and 3434 to 3470; these read SNVS…FKLT, LPGV…PGDY, LPGV…PGSY, and VEGI…PGDY. N3339 carries an N-linked (GlcNAc...) asparagine glycan. N-linked (GlcNAc...) asparagine glycosylation occurs at N3485. The stretch at 3503–3549 is one Kelch 2 repeat; it reads SCFAVSGPLDNQNLGLSLFYEIGTMVWIDSNNNGKFEQPSDVLKSDV. 3 CNA-B domains span residues 3547 to 3614, 3650 to 3686, and 3758 to 3809; these read SDVS…FKLT, LPGV…PGDY, and LPGV…QVAQ. Residues N3769 and N3827 are each glycosylated (N-linked (GlcNAc...) asparagine). In terms of domain architecture, CNA-B 33 spans 3864 to 3900; the sequence is LSDITIRLTDKDGKVIQSTTSGPDGKYQFEDVPPGDY. N3915 carries an N-linked (GlcNAc...) asparagine glycan. CNA-B domains are found at residues 3980–4047, 4083–4128, 4191–4240, 4297–4378, 4425–4492, 4528–4573, 4636–4685, and 4742–4778; these read SDVS…FKLT, LPGV…TPIG, LPGV…YKQV, LSDI…NFVT, and VEGI…PGDY. N4202 is a glycosylation site (N-linked (GlcNAc...) asparagine). The interval 4286–4341 is disordered; the sequence is NTGKQTDDSPPLSDITIRLTDKDGNEITKTKSRPDGNENSNTKSGPDGKYQFEDVP. The segment covering 4304–4321 has biased composition (basic and acidic residues); it reads LTDKDGNEITKTKSRPDG. N4360 is a glycosylation site (N-linked (GlcNAc...) asparagine). The N-linked (GlcNAc...) asparagine glycan is linked to N4647. 2 N-linked (GlcNAc...) asparagine glycosylation sites follow: N4792 and N4918. CNA-B domains lie at 4865 to 4928, 4964 to 5009, 5072 to 5123, and 5178 to 5214; these read ITLT…FKLT, LPGV…TPIG, LPGV…QVAQ, and LEGI…PGDY. The N-linked (GlcNAc...) asparagine glycan is linked to N5083. N-linked (GlcNAc...) asparagine glycans are attached at residues N5229, N5292, and N5348. The stretch at 5247–5293 is one Kelch 3 repeat; it reads SCFAVSGPLDNQNLGLSPFYEIGTIVWIDSNNNDKFEQPSDIGKSNV. 4 consecutive CNA-B domains span residues 5291–5358, 5394–5430, 5502–5553, and 5608–5644; these read SNVS…FKLT, LPGV…PGDY, LPGV…QVAQ, and LSDI…PGDY. The N-linked (GlcNAc...) asparagine glycan is linked to N5513. Residue N5659 is glycosylated (N-linked (GlcNAc...) asparagine). 4 CNA-B domains span residues 5724–5791, 5827–5872, 5935–5984, and 6041–6077; these read SDVS…FKLT, LPGV…TPIG, LPGV…YKQV, and VEGI…PGDY. Residue N5946 is glycosylated (N-linked (GlcNAc...) asparagine). Residues N6092 and N6155 are each glycosylated (N-linked (GlcNAc...) asparagine). CNA-B domains are found at residues 6154-6221, 6257-6302, 6365-6416, and 6471-6507; these read SNVS…FKLT, LPGV…TPIG, LPGV…QDAQ, and LSDI…PGDY. N6376 carries an N-linked (GlcNAc...) asparagine glycan. N-linked (GlcNAc...) asparagine glycans are attached at residues N6522 and N6535. CNA-B domains follow at residues 6587–6654, 6690–6726, 6798–6849, and 6904–6940; these read SDVS…FKLT, LEGV…PGDY, LPGV…QVNQ, and VEGI…PGDY. N6701, N6809, and N6848 each carry an N-linked (GlcNAc...) asparagine glycan. N6954, N7080, N7137, and N7245 each carry an N-linked (GlcNAc...) asparagine glycan. CNA-B domains follow at residues 7023–7090, 7126–7171, 7234–7285, 7340–7411, 7456–7523, 7559–7596, 7668–7719, and 7774–7810; these read SDVS…FKLT, LAGV…TPIG, LPGV…QDAQ, LSDI…VTVK, LPGV…PGDY, LTGV…QVAQ, and VEGI…PGDY. Residues 7351 to 7372 are disordered; the sequence is DGNEITNTKSGPDGKYQFEDVP. N-linked (GlcNAc...) asparagine glycans are attached at residues N7391 and N7404. N7679 carries an N-linked (GlcNAc...) asparagine glycan. 2 N-linked (GlcNAc...) asparagine glycosylation sites follow: N7825 and N7837. CNA-B domains lie at 7887–7954, 7990–8035, 8098–8149, 8204–8265, 8313–8374, 8420–8456, and 8528–8587; these read SDVS…FKLT, LPGV…TPIG, LPGV…QVAQ, IPNI…FSLS, VGKS…VVDQ, LPGV…QGDY, and LPGI…PFDS. 2 N-linked (GlcNAc...) asparagine glycosylation sites follow: N8109 and N8255. N8441, N8539, N8629, N8636, N8655, N8693, N8753, N8811, N8896, N8930, N8976, N9023, N9073, N9087, N9123, N9137, N9146, N9149, N9186, N9297, N9305, N9349, N9409, N9419, N9533, N9543, N9556, N9601, N9709, N9718, N9786, N9839, N9850, N9867, N9891, N9941, N9957, N9989, N10042, N10096, N10111, N10174, N10267, N10315, N10348, N10360, N10379, N10394, N10431, N10477, N10552, N10581, N10715, N10786, N10802, N10943, and N11018 each carry an N-linked (GlcNAc...) asparagine glycan. A Kelch 4 repeat occupies 8592 to 8638; sequence CFDLLDKSITNANLGLIPLYNIGSDAWLDNLNNGVRRNDSLLVPNVT. Residues 8634–8680 form the CNA-B 77 domain; the sequence is VPNVTMSLYDNNGNLIETTITNSSGKYQFNDIQPGSYCVRATVPSNY. The CNA-B 78 domain occupies 8751-8810; sequence LPNVTVQLYDKVSGNILAATRSDDKGGYVVPNLLPSADYCVQFEVPPGYIVVVDSDDSVT. Residues 8965 to 9014 form the CNA-B 79 domain; that stretch reads LPGVSVSLFSPNGTSIANTITDENGKYAFKDQVPGSYCIKMIIPPHYQQV. A CNA-B 80 domain is found at 9071-9107; sequence VPNITMTLLDSQGKQINSTITNANGFYQFVDVAPGNY. The region spanning 9185-9220 is the CNA-B 81 domain; that stretch reads ANVSLSLVNTGNSEIKTTTTNSQGKYSFGQLLAGNY. The region spanning 9299-9332 is the CNA-B 82 domain; sequence TITLTPNNTALPTQTTTTDVNGNYRFDNLVVGNY. CNA-B domains follow at residues 9407–9447 and 9531–9569; these read LVNI…VVQF and MANI…PGNY. In terms of domain architecture, CNA-B 85 spans 9659-9728; sequence VEGITVRIYD…ATGYISIDLS (70 aa). In terms of domain architecture, CNA-B 86 spans 10044 to 10103; the sequence is TLFNADGSTPNDIFGKPIQMAVTDVNGKYSIPNVPPGSYYMTVSIPPRYIISNFTTTGLV. One can recognise a CNA-B 87 domain in the interval 10172 to 10236; sequence LPNVTVLLLN…ITPTKLVSTS (65 aa). Residues 10313–10370 enclose the CNA-B 88 domain; it reads PGNFTVQLKSANQAVNGGLTTVPIGTVVATSPVAANGSFSIPNLQLGNYTLTLIPPSG.

This sequence belongs to the serine-aspartate repeat-containing protein (SDr) family.

The protein localises to the secreted. The sequence is that of Colossin-A (colA) from Dictyostelium discoideum (Social amoeba).